The following is a 207-amino-acid chain: MPTVALFKQDGNQNGEVQLNEAIFGIEPNNNVVFDAVIMQRASLRQGTHAVKNRSAVRGGGKKPWRQKGTGRARQGSIRSPQWVGGGTVFGPTPRSYSYKLPRKVRRLAIKSVLSQKVADESLVVVDALNFDAPKTKAFAEVLSNLNVNSKVLVVLEDDNTTAALAARNLKNVTVIPAKGLNVLDVINNDKLVITQGALSQVEEVLA.

The tract at residues 49–78 (HAVKNRSAVRGGGKKPWRQKGTGRARQGSI) is disordered. The span at 60 to 71 (GGKKPWRQKGTG) shows a compositional bias: basic residues.

This sequence belongs to the universal ribosomal protein uL4 family. Part of the 50S ribosomal subunit.

Functionally, one of the primary rRNA binding proteins, this protein initially binds near the 5'-end of the 23S rRNA. It is important during the early stages of 50S assembly. It makes multiple contacts with different domains of the 23S rRNA in the assembled 50S subunit and ribosome. Forms part of the polypeptide exit tunnel. The chain is Large ribosomal subunit protein uL4 from Ligilactobacillus salivarius (strain UCC118) (Lactobacillus salivarius).